A 539-amino-acid polypeptide reads, in one-letter code: MASILNQTQELQEASKVLGHVRCENFFIFPGENTLSDGLRGVLYFLGLAYCFIGLSAITARFFKSMENVVKHSRKVVAIDPITKAEIITYKKVWNFTIADISLLAFGTSFPQISLATIDAIRNIGERYAGGLGPGTLVGSAAFDLFPIHAVCVVVPKAGELKKISDLGVWLVELVWSFWAYIWLYIILEVWSPNVITLVEALLTVLQYGLLLVHAYAQDKRWPYLSLPMSRGDRPEEWVPEEIDTSKDDNDNDVHDVYSDAAQEAVESGSRNIVDIFSIHSANNDTGITYHTVADTPPDSATKKGKAKNSSVFDIWKHQFVDAITLETSESKKVDSIYLRIANSFWQLLLAPWKLLFAFVPPCNIAHGWIAFIFSLLFISGVAFVVTRFTDLISCVTGINPYVIAFTALASGTSWPDLVASKIAAERQLTADSAIANITCSNSVNIYVGIGVPWLINTVYNYFAYREPLYIENAKGLSFSLLIFFATSVGCIVVLVLRRLIIGAELGGPRLWAWLTSAYFMMLWVVFVVLSSLKVSGVI.

The next 11 membrane-spanning stretches (helical) occupy residues 38–58 (GLRG…LSAI), 98–118 (IADI…LATI), 135–155 (GTLV…CVVV), 167–187 (LGVW…LYII), 195–215 (VITL…LVHA), 341–361 (IANS…AFVP), 365–385 (IAHG…VAFV), 392–412 (LISC…LASG), 444–464 (VNIY…NYFA), 477–497 (LSFS…VLVL), and 511–531 (LWAW…VVLS).

The protein belongs to the Ca(2+):cation antiporter (CaCA) (TC 2.A.19) family. MHX subfamily. As to expression, high expression in leaves (at protein level).

The protein resides in the vacuole membrane. In terms of biological role, vacuolar transporter that exchanges protons with Mg(2+), Zn(2+) and Fe(2+) ions. May control the partitioning of Mg(2+) and Zn(2+) between plant organs. Could play a role in Zn(2+) accumulation or tolerance. In Arabidopsis halleri subsp. halleri (Arabis halleri), this protein is Magnesium/proton exchanger (MHX).